The following is a 29-amino-acid chain: Cyclotide mobo-A (29 aa).

A cross-link (cyclopeptide (Gly-Asn)) is located at residues 1-29 (GFPTCGETCTLGTCNTPGCTCSWPICTRN). 3 disulfide bridges follow: Cys5/Cys19, Cys9/Cys21, and Cys14/Cys26.

This sequence belongs to the cyclotide family. Moebius subfamily. This is a cyclic peptide.

In terms of biological role, probably participates in a plant defense mechanism. The polypeptide is Cyclotide mobo-A (Melicytus obovatus (Hymenanthera obovata)).